The primary structure comprises 669 residues: Glycine--tRNA ligase beta subunit (669 aa).

The protein belongs to the class-II aminoacyl-tRNA synthetase family. As to quaternary structure, tetramer of two alpha and two beta subunits.

It localises to the cytoplasm. The catalysed reaction is tRNA(Gly) + glycine + ATP = glycyl-tRNA(Gly) + AMP + diphosphate. This chain is Glycine--tRNA ligase beta subunit, found in Phenylobacterium zucineum (strain HLK1).